The primary structure comprises 652 residues: Carboxypeptidase Z (652 aa).

The first 20 residues, 1–20 (MPTTPLLLAALAALAALAVA), serve as a signal peptide directing secretion. The 123-residue stretch at 41 to 163 (THSATCVDLH…APEEEGCYDP (123 aa)) folds into the FZ domain. Intrachain disulfides connect C46–C112, C54–C105, C96–C132, C121–C160, and C125–C149. N60 carries an N-linked (GlcNAc...) asparagine glycan. The Peptidase M14 domain maps to 189-505 (AHHSYAQMVR…EPLLNFLEMV (317 aa)). 2 residues coordinate Zn(2+): H251 and E254. An N-linked (GlcNAc...) asparagine glycan is attached at N284. Residue H383 coordinates Zn(2+). E475 serves as the catalytic Proton donor/acceptor. The interval 594–628 (FLPGPSRALPRSLDPQGAPAQLDFEPPRARRQPAS) is disordered.

This sequence belongs to the peptidase M14 family. It depends on Zn(2+) as a cofactor. Abundantly expressed in the placenta, with low to moderate levels in the brain, lung, thymus and kidney.

Its subcellular location is the secreted. The protein resides in the extracellular space. It localises to the extracellular matrix. Inhibited by 2-mercaptomethyl-3-guanidinoethylthiopropanoic acid (MGTA) and guanidinoethylmercaptosuccinic acid (GEMSA). Inhibited by chelating agents such as EDTA and EGTA. Its function is as follows. Cleaves substrates with C-terminal arginine residues. Probably modulates the Wnt signaling pathway, by cleaving some undefined protein. May play a role in cleavage during prohormone processing. The polypeptide is Carboxypeptidase Z (Cpz) (Rattus norvegicus (Rat)).